We begin with the raw amino-acid sequence, 478 residues long: D(1B) dopamine receptor (478 aa).

Residues 1–38 are Extracellular-facing; it reads MLPPGRNGTAHRARLGLQRQLAQVDAPGGSAAPLGPAQ. Residue asparagine 7 is glycosylated (N-linked (GlcNAc...) asparagine). The helical transmembrane segment at 39–64 threads the bilayer; it reads VVTAGLLTLLIVWTLLGNVLVCAAIV. At 65 to 75 the chain is on the cytoplasmic side; the sequence is RSRHLRAKMTN. The chain crosses the membrane as a helical span at residues 76–102; sequence IFIVSLAVSDLFVALLVMPWKAVAEVA. Residues 103-111 are Extracellular-facing; that stretch reads GYWPFGAFC. A disulfide bridge connects residues cysteine 111 and cysteine 211. Residues 112-134 traverse the membrane as a helical segment; it reads DIWVAFDIMCSTASILNLCIISV. Residues 135–153 lie on the Cytoplasmic side of the membrane; sequence DRYWAISRPFRYERKMTQR. Residues 154–179 form a helical membrane-spanning segment; the sequence is VALVMVALAWTLSILISFIPVQLNWH. Residues 180-215 are Extracellular-facing; sequence RDKAGSQGREGLLSNETPWEEGWELDGRTENCDSSL. Residues 216 to 240 form a helical membrane-spanning segment; it reads NRTYAISSSLISFYIPVAIMIVTYT. At 241 to 289 the chain is on the cytoplasmic side; it reads RIYRIAQVQIRRISSLERAAEHAQSCRSRGACEPDPSLRASIKKETKVF. A helical transmembrane segment spans residues 290 to 317; it reads KTLSVIMGVFVCCWLPFFILNCMVPFCS. The Extracellular portion of the chain corresponds to 318–335; it reads SGDAQGPRTGFPCVSETT. A helical transmembrane segment spans residues 336–357; the sequence is FDIFVWFGWANSSLNPIIYAFN. Residues 358–478 lie on the Cytoplasmic side of the membrane; sequence ADFRKVFAQL…LTPNCFHKTA (121 aa). Cysteine 370 is lipidated: S-palmitoyl cysteine. The tract at residues 416 to 446 is disordered; sequence GDREVGEEEEAEEEGPFDHMSQISPTTPDGD. Residues 420–430 are compositionally biased toward acidic residues; sequence VGEEEEAEEEG.

It belongs to the G-protein coupled receptor 1 family.

It is found in the cell membrane. Its function is as follows. Dopamine receptor whose activity is mediated by G proteins which activate adenylyl cyclase. The protein is D(1B) dopamine receptor (Drd5) of Mus musculus (Mouse).